The chain runs to 285 residues: UPF0603 protein At1g54780, chloroplastic (285 aa).

Disordered stretches follow at residues 1 to 48 and 228 to 251; these read METL…LSTR and GQPDPGGPTVKDSKRESNFKTKEE. Polar residues predominate over residues 22-40; sequence HQTKPTSHSLSLSKPTTFS. The segment covering 238 to 251 has biased composition (basic and acidic residues); the sequence is KDSKRESNFKTKEE. A helical membrane pass occupies residues 259–279; that stretch reads FSLVVGGLLVIAFVVPMAQYF.

It belongs to the UPF0603 family.

It is found in the plastid. Its subcellular location is the chloroplast thylakoid membrane. The chain is UPF0603 protein At1g54780, chloroplastic from Arabidopsis thaliana (Mouse-ear cress).